The following is a 671-amino-acid chain: Phenol 2-monooxygenase (671 aa).

Residues 10-43 (DVLIVGAGPAGVMAAAHLLSYGTTARPHRVRIFD) and 295-305 (LQEGRVFLAGD) contribute to the FAD site.

It belongs to the PheA/TfdB FAD monooxygenase family. It depends on FAD as a cofactor.

It localises to the cytoplasm. It catalyses the reaction phenol + NADPH + O2 + H(+) = catechol + NADP(+) + H2O. The protein operates within aromatic compound metabolism; phenol degradation. In terms of biological role, hydroxylates phenol to catechol. Also acts on cresols. The polypeptide is Phenol 2-monooxygenase (tbuD) (Ralstonia pickettii (Burkholderia pickettii)).